A 436-amino-acid chain; its full sequence is MTLPTVAIVGRPNVGKSTLFNRIAGERISIVEDVEGVTRDRIYTSAEWLNRQFSLIDTGGIDDVDAPFMEQIKHQAGIAMTEADVIVFVVSGKEGVTDADEYVARILYKTNKPVILAVNKVDNPEMRADIYDFYSLGLGDPYPVSSVHGIGTGDVLDAIVGNLPTEVEEENPDIIRFSLIGRPNVGKSSLINAILGEDRVIASPIAGTTRDAIDTNFVDSEGQEYTMIDTAGMRKSGKVYENTEKYSIMRSMRAIDRSDVVLMVINAEEGIREYDKRIAGFAHEAGKGIIIVVNKWDTIKKDNHTVANWEADIRDQFQFLSYAPIVFVSAKTKQRLNKLPEMIKRISESQNRRISSAVLNDVIMDAIAINPTPTDKGKRLKIFYGTQVSVKPPTFVIFVNEEELMHFSYMRFLENQIRQAFGFEGTPIHLIARKRK.

EngA-type G domains follow at residues 4–167 (PTVA…PTEV) and 175–351 (IRFS…ESQN). GTP contacts are provided by residues 10 to 17 (GRPNVGKS), 57 to 61 (DTGGI), 119 to 122 (NKVD), 181 to 188 (GRPNVGKS), 229 to 233 (DTAGM), and 294 to 297 (NKWD). A KH-like domain is found at 352–436 (RRISSAVLND…PIHLIARKRK (85 aa)).

Belongs to the TRAFAC class TrmE-Era-EngA-EngB-Septin-like GTPase superfamily. EngA (Der) GTPase family. Associates with the 50S ribosomal subunit.

In terms of biological role, GTPase that plays an essential role in the late steps of ribosome biogenesis. This is GTPase Der from Streptococcus thermophilus (strain CNRZ 1066).